The chain runs to 310 residues: Homoserine kinase (310 aa).

91-101 contacts ATP; sequence PIGSGLGSSAC.

The protein belongs to the GHMP kinase family. Homoserine kinase subfamily.

It is found in the cytoplasm. It carries out the reaction L-homoserine + ATP = O-phospho-L-homoserine + ADP + H(+). The protein operates within amino-acid biosynthesis; L-threonine biosynthesis; L-threonine from L-aspartate: step 4/5. In terms of biological role, catalyzes the ATP-dependent phosphorylation of L-homoserine to L-homoserine phosphate. The chain is Homoserine kinase from Escherichia coli O17:K52:H18 (strain UMN026 / ExPEC).